Reading from the N-terminus, the 210-residue chain is Transcription factor ALC (210 aa).

Residues 1-49 form a disordered region; that stretch reads MGDSDVGDRLPPPSSSDELSSFLRQILSRTPTAQPSSPPKSTNVSSAET. The span at 27 to 48 shows a compositional bias: polar residues; sequence LSRTPTAQPSSPPKSTNVSSAE. Positions 93–142 constitute a bHLH domain; the sequence is IDAQFHNLSEKKRRSKINEKMKALQKLIPNSNKTDKASMLDEAIEYLKQL.

As to quaternary structure, homodimer. In terms of tissue distribution, expressed constitutively in roots, leaves, stems, and flowers. Confined to the valve margins of the silique.

It localises to the nucleus. Its function is as follows. Required for the dehiscence of fruit, especially for the separation of the valve cells from the replum. Promotes the differentiation of a strip of labile nonlignified cells sandwiched between layers of lignified cells. The polypeptide is Transcription factor ALC (ALC) (Arabidopsis thaliana (Mouse-ear cress)).